The sequence spans 467 residues: Glutamate--tRNA ligase (467 aa).

A 'HIGH' region motif is present at residues 10-20 (PSPTGHLHIGG). Zn(2+) contacts are provided by C99, C101, C126, and E128. Positions 236–240 (RLSKR) match the 'KMSKS' region motif. Residue K239 coordinates ATP.

This sequence belongs to the class-I aminoacyl-tRNA synthetase family. Glutamate--tRNA ligase type 1 subfamily. Monomer. The cofactor is Zn(2+).

Its subcellular location is the cytoplasm. The enzyme catalyses tRNA(Glu) + L-glutamate + ATP = L-glutamyl-tRNA(Glu) + AMP + diphosphate. Functionally, catalyzes the attachment of glutamate to tRNA(Glu) in a two-step reaction: glutamate is first activated by ATP to form Glu-AMP and then transferred to the acceptor end of tRNA(Glu). This is Glutamate--tRNA ligase from Desulfosudis oleivorans (strain DSM 6200 / JCM 39069 / Hxd3) (Desulfococcus oleovorans).